Reading from the N-terminus, the 129-residue chain is MAKTPVRARKRVKKQVVDGVRHIHASFNNTIVTITDRQGNALAWATAGGSGFRGSRKSTPFAAQVAAERCAEIVKEFGLKNLEVMVKGPGPGRESTIRALNAAGFRITNITDVTPIPHNGCRPPKKRRV.

Belongs to the universal ribosomal protein uS11 family. Part of the 30S ribosomal subunit. Interacts with proteins S7 and S18. Binds to IF-3.

In terms of biological role, located on the platform of the 30S subunit, it bridges several disparate RNA helices of the 16S rRNA. Forms part of the Shine-Dalgarno cleft in the 70S ribosome. The sequence is that of Small ribosomal subunit protein uS11 from Haemophilus influenzae (strain ATCC 51907 / DSM 11121 / KW20 / Rd).